The following is a 167-amino-acid chain: Small ribosomal subunit protein uS5 (167 aa).

Residues 12–75 (LEDQVVSINR…DAAKKSLIEV (64 aa)) enclose the S5 DRBM domain.

It belongs to the universal ribosomal protein uS5 family. As to quaternary structure, part of the 30S ribosomal subunit. Contacts proteins S4 and S8.

With S4 and S12 plays an important role in translational accuracy. Functionally, located at the back of the 30S subunit body where it stabilizes the conformation of the head with respect to the body. The protein is Small ribosomal subunit protein uS5 of Lacticaseibacillus paracasei (strain ATCC 334 / BCRC 17002 / CCUG 31169 / CIP 107868 / KCTC 3260 / NRRL B-441) (Lactobacillus paracasei).